A 304-amino-acid chain; its full sequence is D-alanine--D-alanine ligase (304 aa).

The 195-residue stretch at 99 to 293 (KKILRYEGIE…YSKLLDMIIE (195 aa)) folds into the ATP-grasp domain. 126 to 181 (LDKLGFPLVVKPNSGGSSVGVKIVYDKDELISMLETVFEWDSEVVIEKYIKGEEIT) is a binding site for ATP. Mg(2+) is bound by residues aspartate 248, glutamate 260, and asparagine 262.

It belongs to the D-alanine--D-alanine ligase family. Mg(2+) serves as cofactor. Mn(2+) is required as a cofactor.

The protein resides in the cytoplasm. The enzyme catalyses 2 D-alanine + ATP = D-alanyl-D-alanine + ADP + phosphate + H(+). The protein operates within cell wall biogenesis; peptidoglycan biosynthesis. Cell wall formation. The chain is D-alanine--D-alanine ligase from Bacillus anthracis (strain A0248).